We begin with the raw amino-acid sequence, 65 residues long: Large ribosomal subunit protein bL28 (65 aa).

The tract at residues 1 to 26 is disordered; the sequence is MARRDDLTNKGPMSGNKRSHALNATK. Over residues 17 to 26 the composition is skewed to basic residues; sequence KRSHALNATK.

It belongs to the bacterial ribosomal protein bL28 family.

This Mycoplasma mobile (strain ATCC 43663 / 163K / NCTC 11711) (Mesomycoplasma mobile) protein is Large ribosomal subunit protein bL28.